The chain runs to 271 residues: Type III pantothenate kinase (271 aa).

6 to 13 lines the ATP pocket; the sequence is DVRNTHTV. Residue 109-112 coordinates substrate; it reads GADR. The active-site Proton acceptor is the D111. D131 is a binding site for K(+). S134 provides a ligand contact to ATP. Substrate is bound at residue T186.

The protein belongs to the type III pantothenate kinase family. Homodimer. The cofactor is NH4(+). K(+) is required as a cofactor.

It is found in the cytoplasm. The catalysed reaction is (R)-pantothenate + ATP = (R)-4'-phosphopantothenate + ADP + H(+). Its pathway is cofactor biosynthesis; coenzyme A biosynthesis; CoA from (R)-pantothenate: step 1/5. In terms of biological role, catalyzes the phosphorylation of pantothenate (Pan), the first step in CoA biosynthesis. The protein is Type III pantothenate kinase of Mycobacteroides abscessus (strain ATCC 19977 / DSM 44196 / CCUG 20993 / CIP 104536 / JCM 13569 / NCTC 13031 / TMC 1543 / L948) (Mycobacterium abscessus).